Reading from the N-terminus, the 544-residue chain is GDP-mannose 4,6-dehydratase sdnI (544 aa).

NADP(+)-binding positions include 16 to 21 (GITGQD), Arg-41, 64 to 65 (DM), and 86 to 90 (LAAQS). Ser-90 serves as a coordination point for substrate. Catalysis depends on nucleophile residues Glu-135 and Tyr-157. Tyr-157 provides a ligand contact to substrate. NADP(+) is bound at residue Lys-161. Asn-186 is a binding site for substrate. NADP(+) contacts are provided by His-187 and Arg-192. Substrate-binding positions include 192-200 (RGTTFVTRK), Gly-219, Arg-225, and 303-306 (RPVE). The tract at residues 366–406 (GETTSAVNSSPSSTAGDTYKASDGWSTSGAEGSEQTECSSV) is disordered. 2 stretches are compositionally biased toward polar residues: residues 368 to 381 (TTSA…STAG) and 389 to 404 (GWST…TECS).

Belongs to the NAD(P)-dependent epimerase/dehydratase family. GDP-mannose 4,6-dehydratase subfamily. The cofactor is NADP(+).

It catalyses the reaction GDP-alpha-D-mannose = GDP-4-dehydro-alpha-D-rhamnose + H2O. It participates in antibiotic biosynthesis. Its function is as follows. GDP-mannose 4,6-dehydratase; part of the gene cluster that mediates the biosynthesis of sordarin and hypoxysordarin, glycoside antibiotics with a unique tetracyclic diterpene aglycone structure. First, the geranylgeranyl diphosphate synthase sdnC constructs GGDP from farnesyl diphosphate and isopentenyl diphosphate. The diterpene cyclase sdnA then catalyzes the cyclization of GGDP to afford cycloaraneosene. Cycloaraneosene is then hydroxylated four times by the putative cytochrome P450 monooxygenases sdnB, sdnE, sdnF and sdnH to give a hydroxylated cycloaraneosene derivative such as cycloaraneosene-8,9,13,19-tetraol. Although the order of the hydroxylations is unclear, at least C8, C9 and C13 of the cycloaraneosene skeleton are hydroxylated before the sordaricin formation. Dehydration of the 13-hydroxy group of the hydroxylated cycloaraneosene derivative might be catalyzed by an unassigned hypothetical protein such as sdnG and sdnP to construct the cyclopentadiene moiety. The FAD-dependent oxidoreductase sdnN is proposed to catalyze the oxidation at C9 of the hydroxylated cycloaraneosene derivative and also catalyze the Baeyer-Villiger oxidation to give the lactone intermediate. The presumed lactone intermediate would be hydrolyzed to give an acrolein moiety and a carboxylate moiety. Then, [4+2]cycloaddition would occur between the acrolein moiety and the cyclopentadiene moiety to give sordaricin. SdnN might also be involved in the [4+2]cycloaddition after the hypothesized oxidation to accommodate the oxidized product and prompt the [4+2]cycloaddition. GDP-6-deoxy-D-altrose may be biosynthesized from GDP-D-mannose by the putative GDP-mannose-4,6-dehydratase sdnI and the short-chain dehydrogenase sdnK. The glycosyltransferase sdnJ catalyzes the attachment of 6-deoxy-D-altrose onto the 19-hydroxy group of sordaricin to give 4'-O-demethylsordarin. The methyltransferase sdnD would complete the biosynthesis of sordarin. Sordarin can be further modified into hypoxysordarin. The unique acyl chain at the 3'-hydroxy group of hypoxysordarin would be constructed by an iterative type I PKS sdnO and the trans-acting polyketide methyltransferase sdnL. SdnL would be responsible for the introduction of an alpha-methyl group of the polyketide chain. Alternatively, the beta-lactamase-like protein sdnR might be responsible for the cleavage and transfer of the polyketide chain from the PKS sdnO to sordarin. Two putative cytochrome P450 monooxygenases, sdnQ and sdnT, might catalyze the epoxidations of the polyketide chain to complete the biosynthesis of hypoxysordarin. Transcriptional regulators sdnM and sdnS are presumably encoded for the transcriptional regulation of the expression of the sdn gene cluster. This Sordaria araneosa (Pleurage araneosa) protein is GDP-mannose 4,6-dehydratase sdnI.